The chain runs to 655 residues: Probable alpha-galactosidase D (655 aa).

Positions 1–16 (MASVIALSLLLPAAFA) are cleaved as a signal peptide. Asparagine 87 and asparagine 93 each carry an N-linked (GlcNAc...) asparagine glycan. A disulfide bridge connects residues cysteine 126 and cysteine 153. The active-site Nucleophile is the aspartate 151. Residue 196–200 (EWGID) coordinates substrate. Aspartate 218 serves as the catalytic Proton donor. 5 N-linked (GlcNAc...) asparagine glycosylation sites follow: asparagine 432, asparagine 482, asparagine 502, asparagine 540, and asparagine 579.

Belongs to the glycosyl hydrolase 27 family.

Its subcellular location is the secreted. The catalysed reaction is Hydrolysis of terminal, non-reducing alpha-D-galactose residues in alpha-D-galactosides, including galactose oligosaccharides, galactomannans and galactolipids.. Functionally, hydrolyzes a variety of simple alpha-D-galactoside as well as more complex molecules such as oligosaccharides and polysaccharides. This is Probable alpha-galactosidase D (aglD) from Aspergillus terreus (strain NIH 2624 / FGSC A1156).